The sequence spans 695 residues: Follicle-stimulating hormone receptor (695 aa).

An N-terminal signal peptide occupies residues 1–17; sequence MTFLLVSLLAFLSLGSG. Disulfide bonds link Cys18/Cys25 and Cys23/Cys32. The LRRNT domain maps to 18–46; it reads CHHRICHCWHRVFLCQESKVTEIPSDLPR. At 18-366 the chain is on the extracellular side; it reads CHHRICHCWH…EDIMGYDILR (349 aa). LRR repeat units lie at residues 49-72, 73-97, 98-118, 119-143, 144-169, 170-192, 193-216, 217-240, and 241-259; these read VELR…FGDL, EKIE…LSKL, HEIR…AFQN, LPNL…KIQS, LQKV…MGLS, FESM…AFNG, TQLD…VFQG, ASGP…GLEN, and IKKL…PSLD. N-linked (GlcNAc...) asparagine glycosylation is present at Asn93. 2 N-linked (GlcNAc...) asparagine glycosylation sites follow: Asn191 and Asn199. Disulfide bonds link Cys275–Cys346, Cys276–Cys292, Cys276–Cys356, and Cys292–Cys338. An N-linked (GlcNAc...) asparagine glycan is attached at Asn293. Sulfotyrosine is present on Tyr335. A helical transmembrane segment spans residues 367-387; the sequence is VLIWFISILAITGNIIVLMIL. Residues 388 to 398 are Cytoplasmic-facing; it reads ITSQYKLTVPR. Residues 399–419 traverse the membrane as a helical segment; that stretch reads FLMCNLAFADLCIGIYLLLIA. At 420–444 the chain is on the extracellular side; sequence SVDIYTKSQYHNYAIDWQTGAGCDA. Residues 445–465 form a helical membrane-spanning segment; it reads AGFFTVFASELSVYTLTVITL. Topologically, residues 466-487 are cytoplasmic; it reads ERWHTITHAMQLECKVQLRHAA. Residues 488-508 form a helical membrane-spanning segment; the sequence is IIMLLGWIFAFMVALFPIFGI. The Extracellular portion of the chain corresponds to 509-528; sequence SSYMKVSICLPMDIDSPLSQ. The helical transmembrane segment at 529–550 threads the bilayer; it reads LYVMSLLVLNVLAFVVICCCYA. The Cytoplasmic segment spans residues 551 to 573; the sequence is HIYLTVRNPNIVSSSSDTKIAKR. The helical transmembrane segment at 574–594 threads the bilayer; that stretch reads MAMLIFTDFLCMAPISFFAIS. The Extracellular segment spans residues 595–608; it reads ASLKVPLITVSKSK. Residues 609-629 traverse the membrane as a helical segment; it reads ILLVLFYPINSCANPFLYAIF. The Cytoplasmic segment spans residues 630-695; it reads TKNFRRDFFI…LIPLRHLAKN (66 aa).

It belongs to the G-protein coupled receptor 1 family. FSH/LSH/TSH subfamily. As to quaternary structure, homotrimer. Functions as a homotrimer binding the FSH hormone heterodimer composed of CGA and FSHB. Interacts with ARRB2. Interacts with APPL2; interaction is independent of follicle stimulating hormone stimulation. In terms of processing, N-glycosylated; indirectly required for FSH-binding, possibly via a conformational change that allows high affinity binding of hormone. Post-translationally, sulfated.

Its subcellular location is the cell membrane. Its function is as follows. G protein-coupled receptor for follitropin, the follicle-stimulating hormone. Through cAMP production activates the downstream PI3K-AKT and ERK1/ERK2 signaling pathways. This chain is Follicle-stimulating hormone receptor (FSHR), found in Felis catus (Cat).